The primary structure comprises 173 residues: Co-chaperone protein HscB homolog (173 aa).

A J domain is found at 5–77 (CHFALFELKP…PKRARYLLAM (73 aa)).

This sequence belongs to the HscB family. In terms of assembly, interacts with HscA and stimulates its ATPase activity.

Its function is as follows. Co-chaperone involved in the maturation of iron-sulfur cluster-containing proteins. Seems to help targeting proteins to be folded toward HscA. The polypeptide is Co-chaperone protein HscB homolog (Pseudomonas syringae pv. tomato (strain ATCC BAA-871 / DC3000)).